Consider the following 626-residue polypeptide: (+)-3-carene synthase 2, chloroplastic (626 aa).

The N-terminal 45 residues, 1-45, are a transit peptide targeting the chloroplast; sequence MSLISAVPLASSCVSKSLISSVREHTALRRAIATLQMSRRGKSVA. Mg(2+) is bound by residues aspartate 377, aspartate 381, and aspartate 529. The DDXXD motif motif lies at 377–381; sequence DDMYD.

The protein belongs to the terpene synthase family. Tpsd subfamily. The cofactor is Mg(2+). Mn(2+) serves as cofactor.

It is found in the plastid. The protein localises to the chloroplast. It catalyses the reaction (2E)-geranyl diphosphate = (+)-car-3-ene + diphosphate. It functions in the pathway terpene metabolism; oleoresin biosynthesis. It participates in secondary metabolite biosynthesis; terpenoid biosynthesis. In terms of biological role, monoterpene synthase (TPS) involved in the biosynthesis of monoterpene natural products included in conifer oleoresin secretions and volatile emissions; these compounds contribute to biotic and abiotic stress defense against herbivores and pathogens. Catalyzes the conversion of (2E)-geranyl diphosphate (GPP) to (+)-3-carene. The sequence is that of (+)-3-carene synthase 2, chloroplastic from Pinus banksiana (Jack pine).